Here is a 397-residue protein sequence, read N- to C-terminus: Na(+)/H(+) antiporter NhaA 1 (397 aa).

12 helical membrane passes run 15-35, 42-62, 65-85, 101-121, 129-149, 160-180, 183-203, 219-241, 265-285, 299-319, 335-355, and 370-390; these read FQLE…ALII, YLYG…LNIA, LLLW…GLEV, ILPA…YWFI, VAGW…VLAL, LFLM…IALF, GTLS…LVAM, LILW…ALAF, WVAY…SLAG, ITIG…WVAV, ILGV…VGSL, and MGIL…TAMA.

The protein belongs to the NhaA Na(+)/H(+) (TC 2.A.33) antiporter family.

The protein resides in the cell inner membrane. The enzyme catalyses Na(+)(in) + 2 H(+)(out) = Na(+)(out) + 2 H(+)(in). Functionally, na(+)/H(+) antiporter that extrudes sodium in exchange for external protons. The chain is Na(+)/H(+) antiporter NhaA 1 from Pseudomonas putida (strain ATCC 47054 / DSM 6125 / CFBP 8728 / NCIMB 11950 / KT2440).